Consider the following 254-residue polypeptide: MAIANKNIIFVAGLGGIGFDTSREIVKSGPKNLVILDRIENPAAIAELKALNPNVTVTFYPYDVTVPVAETTKLLQKIFDQLKTVDLLINGAGILDDYQIERTIAVNFTGTVNTTTAIMSFWDKRKGGPGGVIANICSVTGFNAIYQVPVYSASKAAALSSTNSLAKLAPITGVTAYSINPGITKTPLVHKFNSWLDVEPRVAELLLEHPTQTSLQCAQNFVKAIEANQNGAIWKLDLGTLEAIEWTKHWDSHI.

Residue 10 to 33 (FVAGLGGIGFDTSREIVKSGPKNL) participates in NAD(+) binding. Position 138 (Ser-138) interacts with substrate. The Proton acceptor role is filled by Tyr-151.

The protein belongs to the short-chain dehydrogenases/reductases (SDR) family. In terms of assembly, homodimer.

The catalysed reaction is a primary alcohol + NAD(+) = an aldehyde + NADH + H(+). The enzyme catalyses a secondary alcohol + NAD(+) = a ketone + NADH + H(+). This is Alcohol dehydrogenase 1 (Adh1) from Drosophila mulleri (Fruit fly).